The chain runs to 446 residues: Transcriptional regulator STERILE APETALA (446 aa).

The segment covering 1-10 has biased composition (low complexity); the sequence is MSTSSSSSDN. The segment at 1 to 32 is disordered; that stretch reads MSTSSSSSDNGAGGSGGVFEAPSPSRPRRGAN.

Expressed in inflorescence and floral meristems, young floral organ primordia, and later in ovule primordia.

It localises to the nucleus. Transcriptional regulator involved in the specification of floral identity. Acts as A class cadastral protein by repressing the C class floral homeotic gene AGAMOUS in the external flower organs in association with APETALA2 and other repressors. Is required to maintain floral meristem identity in concert with AGAMOUS. Also interacts with APETALA2 to ensure the normal development of ovule. The sequence is that of Transcriptional regulator STERILE APETALA (SAP) from Arabidopsis thaliana (Mouse-ear cress).